Here is a 229-residue protein sequence, read N- to C-terminus: Putative N-acetylmannosamine-6-phosphate 2-epimerase (229 aa).

It belongs to the NanE family.

It carries out the reaction an N-acyl-D-glucosamine 6-phosphate = an N-acyl-D-mannosamine 6-phosphate. It functions in the pathway amino-sugar metabolism; N-acetylneuraminate degradation; D-fructose 6-phosphate from N-acetylneuraminate: step 3/5. Converts N-acetylmannosamine-6-phosphate (ManNAc-6-P) to N-acetylglucosamine-6-phosphate (GlcNAc-6-P). This Salmonella agona (strain SL483) protein is Putative N-acetylmannosamine-6-phosphate 2-epimerase.